We begin with the raw amino-acid sequence, 292 residues long: Galactinol synthase 2 (292 aa).

The active site involves lysine 65. Mn(2+)-binding residues include aspartate 81, aspartate 83, and histidine 218.

It belongs to the glycosyltransferase 8 family. Galactosyltransferase subfamily. Requires a divalent metal cation as cofactor. In terms of tissue distribution, present in phloem-associated intermediary cells. Weakly expressed in leaves.

It is found in the cytoplasm. It carries out the reaction myo-inositol + UDP-alpha-D-galactose = alpha-D-galactosyl-(1-&gt;3)-1D-myo-inositol + UDP + H(+). Functionally, may promote plant stress tolerance. Galactinol synthase mainly involved in the biosynthesis of transport raffinose family oligosaccharides (RFOs) that function as osmoprotectants. The sequence is that of Galactinol synthase 2 (GOLS2) from Ajuga reptans (Bugle).